A 532-amino-acid chain; its full sequence is Deoxyribodipyrimidine photo-lyase (532 aa).

The disordered stretch occupies residues 1–57 (MDSKKRSHSTGGEAENMESQESKAKRKPLQKHQFSKSNVVQKEEKDKTEGEEKGAEG). The segment covering 24 to 34 (AKRKPLQKHQF) has biased composition (basic residues). The segment covering 41-55 (QKEEKDKTEGEEKGA) has biased composition (basic and acidic residues). The Photolyase/cryptochrome alpha/beta domain occupies 97–229 (QAFVYWMSRD…QVDAHNIVPC (133 aa)). Position 322 (Arg322) interacts with DNA. 2 interaction with DNA regions span residues 368–376 (EAVVRRELA) and 442–443 (GF). 468–470 (YLN) lines the FAD pocket.

It belongs to the DNA photolyase class-2 family. It depends on FAD as a cofactor.

The enzyme catalyses cyclobutadipyrimidine (in DNA) = 2 pyrimidine residues (in DNA).. In terms of biological role, involved in repair of UV radiation-induced DNA damage. Catalyzes the light-dependent monomerization (300-600 nm) of cyclobutyl pyrimidine dimers (in cis-syn configuration), which are formed between adjacent bases on the same DNA strand upon exposure to ultraviolet radiation. This chain is Deoxyribodipyrimidine photo-lyase (PHR), found in Potorous tridactylus (Potoroo).